The sequence spans 473 residues: H(+)/Cl(-) exchange transporter ClcA (473 aa).

Topologically, residues 1 to 32 (MKTDTPSLEIPQAARLRRRQLIRQLLERDKTP) are cytoplasmic. A helical membrane pass occupies residues 33–69 (LAILFMAAVVGTLVGLAAVAFDKGVSWLQNQRMGALV). The Periplasmic portion of the chain corresponds to 70-76 (HTADNYP). The helical transmembrane segment at 77-100 (LLLTVAFLCSAVLAMFGYFLVRKY) threads the bilayer. Positions 106–110 (GSGIP) match the Selectivity filter part_1 motif. Ser-107 contacts chloride. Residues 109–116 (IPEIEGAL) constitute an intramembrane region (helical). Over 117 to 123 (EDQRPVR) the chain is Cytoplasmic. Transmembrane regions (helical) follow at residues 124–141 (WWRV…TLGG) and 148–166 (EGPT…LDIF). The Selectivity filter part_2 signature appears at 146–150 (GREGP). Residues 167 to 176 (RLKGDEARHT) lie on the Cytoplasmic side of the membrane. 2 intramembrane regions (helical) span residues 177 to 189 (LLAT…LAAA) and 193 to 201 (PLAGILFII). Over 202-214 (EEMRPQFRYTLIS) the chain is Cytoplasmic. Residues 215–232 (IKAVFIGVIMSTIMYRIF) traverse the membrane as a helical segment. Topologically, residues 233-252 (NHEVALIDVGKLSDAPLNTL) are periplasmic. The chain crosses the membrane as a helical span at residues 253 to 281 (WLYLILGIIFGIFGPIFNKWVLGMQDLLH). The Cytoplasmic segment spans residues 282-287 (RVHGGN). Residues 288–309 (ITKWVIMGGAIGGLCGLLGFVA) traverse the membrane as a helical segment. Residues 310–329 (PATSGGGFNLIPIATAGNFS) lie on the Periplasmic side of the membrane. A run of 2 helical transmembrane segments spans residues 330 to 349 (MGML…LCFS) and 355 to 376 (GIFA…MVAV). The short motif at 355 to 359 (GIFAP) is the Selectivity filter part_3 element. The chloride site is built by Ile-356 and Phe-357. The Periplasmic portion of the chain corresponds to 377–386 (ELFPQYHLEA). Positions 387 to 401 (GTFAIAGMGALLAAS) form an intramembrane region, helical. The note=Loop between two helices intramembrane region spans 402-404 (IRA). The segment at residues 405–416 (PLTGIILVLEMT) is an intramembrane region (helical). The note=Loop between two helices intramembrane region spans 417–421 (DNYQL). The chain crosses the membrane as a helical span at residues 422–438 (ILPMIITGLGATLLAQF). Over 439–473 (TGGKPLYSAILARTLAKQEAEQLARSKAASASENT) the chain is Cytoplasmic. A chloride-binding site is contributed by Tyr-445.

It belongs to the chloride channel (TC 2.A.49) family. ClcA subfamily. As to quaternary structure, homodimer.

The protein localises to the cell inner membrane. It carries out the reaction 2 chloride(in) + H(+)(out) = 2 chloride(out) + H(+)(in). Its function is as follows. Proton-coupled chloride transporter. Functions as antiport system and exchanges two chloride ions for 1 proton. Probably acts as an electrical shunt for an outwardly-directed proton pump that is linked to amino acid decarboxylation, as part of the extreme acid resistance (XAR) response. The protein is H(+)/Cl(-) exchange transporter ClcA of Escherichia fergusonii (strain ATCC 35469 / DSM 13698 / CCUG 18766 / IAM 14443 / JCM 21226 / LMG 7866 / NBRC 102419 / NCTC 12128 / CDC 0568-73).